A 585-amino-acid chain; its full sequence is uncharacterized protein (585 aa).

Residues 1 to 34 (MNAYVRDSESVYSESYPPENFISNEPEKSKDKDN) form a disordered region. Topologically, residues 1–89 (MNAYVRDSES…KRRLKSRHIQ (89 aa)) are cytoplasmic. Positions 10–19 (SVYSESYPPE) are enriched in low complexity. A compositionally biased stretch (basic and acidic residues) spans 25-34 (EPEKSKDKDN). A helical transmembrane segment spans residues 90-110 (MIGIGGAIGTGVWVGSSKSLY). The Extracellular segment spans residues 111-121 (RGGAASVLIDY). A helical transmembrane segment spans residues 122-142 (CIVGTMVFCTVYALGELAVAF). The Cytoplasmic portion of the chain corresponds to 143–159 (PTRGSFVTHATRFIDES). Residues 160 to 180 (WGFALSWNYVFSFIVTIPLEL) traverse the membrane as a helical segment. Residues 181–193 (TTGTMMIKYWTNL) lie on the Extracellular side of the membrane. Residues 194–214 (NSGIWVTVFIVFLFFINIFGV) traverse the membrane as a helical segment. Over 215–221 (KGYGEME) the chain is Cytoplasmic. A helical membrane pass occupies residues 222 to 242 (FIMSTIKVVAMCGFIILGIII). The Extracellular segment spans residues 243–271 (DCGGVPTDHRGYMGTHIFRENAFRHKFKG). Residues 272–292 (FCAVFTSAAFSFSGTEYVGVA) traverse the membrane as a helical segment. Topologically, residues 293–313 (AAETENPAKAFPVAVRQTLFR) are cytoplasmic. A helical membrane pass occupies residues 314–334 (IAIFYILSLFIVSLLISGADP). Topologically, residues 335–361 (RLTSYHGVDASPFVLAIKDANIKALPS) are extracellular. Residues 362–382 (ILNAIILISVISSANAQLYAG) form a helical membrane-spanning segment. At 383–407 (SRAIHSLGCNGFAPKCFTLVDREGR) the chain is on the cytoplasmic side. A helical transmembrane segment spans residues 408-428 (PLVALLILFLFMFLGYLVETG). The Extracellular segment spans residues 429–436 (QYDTVFDW). A helical transmembrane segment spans residues 437–457 (MLSISGLGTLFCWGSICLAHI). Topologically, residues 458–486 (RYRAAMKHQNRSLKEVGFVSPFNVYASYY) are cytoplasmic. A helical membrane pass occupies residues 487 to 507 (AFILVCLVLAAEFYVSIFPVG). Residues 508–511 (GKPD) are Extracellular-facing. A helical transmembrane segment spans residues 512-532 (ASAFFENYLSAPVILVFFICH). Topologically, residues 533 to 585 (KLYYKTKRITLSNMDLETDFAYKTPVEEEEEEEKSAGSLSIKQRMKKLSDMMC) are cytoplasmic.

It belongs to the amino acid-polyamine-organocation (APC) superfamily.

It localises to the endoplasmic reticulum. The protein localises to the membrane. This is an uncharacterized protein from Schizosaccharomyces pombe (strain 972 / ATCC 24843) (Fission yeast).